We begin with the raw amino-acid sequence, 324 residues long: 26S proteasome non-ATPase regulatory subunit 7 (324 aa).

Positions 9–144 constitute an MPN domain; the sequence is VVVHPLVLLS…TEAYISVEEV (136 aa). Residue K180 forms a Glycyl lysine isopeptide (Lys-Gly) (interchain with G-Cter in ubiquitin) linkage. K204, K214, K316, and K317 each carry N6-acetyllysine. The disordered stretch occupies residues 281 to 324; that stretch reads ANRDAEKKEGQEKEESKKDRKEDKEKDKDKEKSDVKKEEKKEKK.

This sequence belongs to the peptidase M67A family. In terms of assembly, component of the 19S proteasome regulatory particle complex. The 26S proteasome consists of a 20S core particle (CP) and two 19S regulatory subunits (RP). The regulatory particle is made of a lid composed of 9 subunits including PSMD7, a base containing 6 ATPases and few additional components. Within the complex, PSMD7 interacts with subunit PSMD4 through their respective MPN domain. Interacts with TRIM5.

Functionally, component of the 26S proteasome, a multiprotein complex involved in the ATP-dependent degradation of ubiquitinated proteins. This complex plays a key role in the maintenance of protein homeostasis by removing misfolded or damaged proteins, which could impair cellular functions, and by removing proteins whose functions are no longer required. Therefore, the proteasome participates in numerous cellular processes, including cell cycle progression, apoptosis, or DNA damage repair. This chain is 26S proteasome non-ATPase regulatory subunit 7 (PSMD7), found in Homo sapiens (Human).